A 233-amino-acid chain; its full sequence is Proteasome subunit beta type-6 (233 aa).

Positions 1-12 are cleaved as a propeptide — removed in mature form; that stretch reads MDLNLDAPHSMG. Catalysis depends on Thr-13, which acts as the Nucleophile.

This sequence belongs to the peptidase T1B family. As to quaternary structure, component of the 20S core complex of the 26S proteasome. The 26S proteasome is composed of a core protease (CP), known as the 20S proteasome, capped at one or both ends by the 19S regulatory particle (RP/PA700). The 20S proteasome core is composed of 28 subunits that are arranged in four stacked rings, resulting in a barrel-shaped structure. The two end rings are each formed by seven alpha subunits, and the two central rings are each formed by seven beta subunits. The catalytic chamber with the active sites is on the inside of the barrel.

The protein localises to the cytoplasm. The protein resides in the nucleus. It carries out the reaction Cleavage of peptide bonds with very broad specificity.. The proteasome is a multicatalytic proteinase complex which is characterized by its ability to cleave peptides with Arg, Phe, Tyr, Leu, and Glu adjacent to the leaving group at neutral or slightly basic pH. The proteasome has an ATP-dependent proteolytic activity. In Arabidopsis thaliana (Mouse-ear cress), this protein is Proteasome subunit beta type-6 (PBA1).